Consider the following 397-residue polypeptide: Putative gustatory receptor 93c (397 aa).

Over 1–12 the chain is Cytoplasmic; that stretch reads MIERLKKVSLPA. A helical transmembrane segment spans residues 13–33; the sequence is LSAFILFCSCHYGRILGVICF. At 34–87 the chain is on the extracellular side; the sequence is DIGQRTSDDSLVVRNRHQFKWFCLSCRLISVTAVCCFCAPYVADIEDPYERLLQ. Residues 88 to 108 traverse the membrane as a helical segment; that stretch reads CFRLSASLICGICIIVVQVCY. The Cytoplasmic portion of the chain corresponds to 109-141; the sequence is EKELLRMIISFLRLFRRVRRLSSLKRIGFGGKR. Residues 142 to 162 traverse the membrane as a helical segment; that stretch reads EFFLLLFKFICLVYELYSEIC. Over 163–179 the chain is Extracellular; it reads QLWHLPDSLSLFATLCE. A helical membrane pass occupies residues 180–200; sequence IFLEIGSLMIIHIGFVGYLSV. At 201–266 the chain is on the cytoplasmic side; the sequence is AALYSEVNSF…RTFHRLLELP (66 aa). A helical membrane pass occupies residues 267–287; the sequence is VLIILLGKIFATTILSYEVII. The Extracellular portion of the chain corresponds to 288 to 295; the sequence is RPELYARK. The helical transmembrane segment at 296-316 threads the bilayer; that stretch reads IGMWGLVVKSFADVILLTLAV. Residues 317-371 lie on the Cytoplasmic side of the membrane; sequence HEAVSSSRMMRRLSLENFPITDHKAWHMKWEMFLSRLNFFEFRVRPLGLFEVSNE. The helical transmembrane segment at 372–392 threads the bilayer; that stretch reads VILLFLSSMITYFTYVVQYGI. Residues 393–397 lie on the Extracellular side of the membrane; that stretch reads QTNRL.

It belongs to the insect chemoreceptor superfamily. Gustatory receptor (GR) family. Gr93a subfamily. In larvae, is expressed in neurons of the posterior pharyngeal sense organ.

The protein resides in the cell membrane. In terms of biological role, probable gustatory receptor which mediates acceptance or avoidance behavior, depending on its substrates. The protein is Putative gustatory receptor 93c (Gr93c) of Drosophila melanogaster (Fruit fly).